The primary structure comprises 141 residues: Large ribosomal subunit protein uL11 (141 aa).

The protein belongs to the universal ribosomal protein uL11 family. As to quaternary structure, part of the ribosomal stalk of the 50S ribosomal subunit. Interacts with L10 and the large rRNA to form the base of the stalk. L10 forms an elongated spine to which L12 dimers bind in a sequential fashion forming a multimeric L10(L12)X complex. In terms of processing, one or more lysine residues are methylated.

Its function is as follows. Forms part of the ribosomal stalk which helps the ribosome interact with GTP-bound translation factors. The polypeptide is Large ribosomal subunit protein uL11 (Chlorobium phaeovibrioides (strain DSM 265 / 1930) (Prosthecochloris vibrioformis (strain DSM 265))).